Consider the following 361-residue polypeptide: Probable galacturonosyltransferase-like 5 (361 aa).

The Cytoplasmic segment spans residues 1–6 (MHWITR). The chain crosses the membrane as a helical; Signal-anchor for type II membrane protein span at residues 7-27 (FSAFFSAALAMILLSPSLQSF). Over 28–361 (SPAAAIRSSH…APYDLYKHSH (334 aa)) the chain is Lumenal. Residues Asn218 and Asn234 are each glycosylated (N-linked (GlcNAc...) asparagine).

It belongs to the glycosyltransferase 8 family.

It localises to the golgi apparatus membrane. It participates in glycan metabolism; pectin biosynthesis. Its function is as follows. May be involved in pectin and/or xylans biosynthesis in cell walls. In Arabidopsis thaliana (Mouse-ear cress), this protein is Probable galacturonosyltransferase-like 5 (GATL5).